We begin with the raw amino-acid sequence, 320 residues long: Adhesin MafA 1 (320 aa).

An N-terminal signal peptide occupies residues 1–18; sequence MQARLLIPILFSVFILSA. Cysteine 19 is lipidated: N-palmitoyl cysteine. Cysteine 19 carries S-diacylglycerol cysteine lipidation. The interval 288–320 is disordered; sequence HMGNSAPSVEADNSHEGYGYSDEAVRRHRQGQP.

The protein belongs to the MafA family.

It localises to the cell outer membrane. This Neisseria meningitidis serogroup A / serotype 4A (strain DSM 15465 / Z2491) protein is Adhesin MafA 1 (mafA1).